A 239-amino-acid polypeptide reads, in one-letter code: Pyridoxine 5'-phosphate synthase (239 aa).

Residue N7 coordinates 3-amino-2-oxopropyl phosphate. Position 9–10 (9–10 (DH)) interacts with 1-deoxy-D-xylulose 5-phosphate. R18 is a 3-amino-2-oxopropyl phosphate binding site. H43 acts as the Proton acceptor in catalysis. The 1-deoxy-D-xylulose 5-phosphate site is built by R45 and H50. The Proton acceptor role is filled by E70. T100 provides a ligand contact to 1-deoxy-D-xylulose 5-phosphate. The active-site Proton donor is H191. 3-amino-2-oxopropyl phosphate contacts are provided by residues G192 and 213–214 (GH).

The protein belongs to the PNP synthase family. Homooctamer; tetramer of dimers.

The protein localises to the cytoplasm. The enzyme catalyses 3-amino-2-oxopropyl phosphate + 1-deoxy-D-xylulose 5-phosphate = pyridoxine 5'-phosphate + phosphate + 2 H2O + H(+). It functions in the pathway cofactor biosynthesis; pyridoxine 5'-phosphate biosynthesis; pyridoxine 5'-phosphate from D-erythrose 4-phosphate: step 5/5. Functionally, catalyzes the complicated ring closure reaction between the two acyclic compounds 1-deoxy-D-xylulose-5-phosphate (DXP) and 3-amino-2-oxopropyl phosphate (1-amino-acetone-3-phosphate or AAP) to form pyridoxine 5'-phosphate (PNP) and inorganic phosphate. This Syntrophotalea carbinolica (strain DSM 2380 / NBRC 103641 / GraBd1) (Pelobacter carbinolicus) protein is Pyridoxine 5'-phosphate synthase.